Here is a 644-residue protein sequence, read N- to C-terminus: Protein DA1-related 6 (644 aa).

3 UIM domains span residues 119–138 (EEDE…NNRR), 181–200 (DVDE…KGKG), and 244–263 (DEDE…KGQI). Residues 284–355 (SLCGGCNFAV…YVCKEKKMKT (72 aa)) enclose the LIM zinc-binding domain. The span at 572–589 (ASSSASSSSRTPPAASAS) shows a compositional bias: low complexity. The tract at residues 572-591 (ASSSASSSSRTPPAASASKK) is disordered.

In terms of assembly, interacts with ubiquitin.

In terms of biological role, ubiquitin receptor that probably regulates developmental process. This chain is Protein DA1-related 6 (DAR6), found in Arabidopsis thaliana (Mouse-ear cress).